The following is a 153-amino-acid chain: Hsp90 co-chaperone HCH1 (153 aa).

The protein belongs to the AHA1 family. As to quaternary structure, monomer. Interacts with HSP82.

The protein localises to the cytoplasm. The protein resides in the nucleus. Its function is as follows. Co-chaperone that binds to the molecular chaperone HSP82 and stimulates its ATPase activity. Although not essential, it confers thermotolerance when intracellular levels of HSP82 are limiting. The chain is Hsp90 co-chaperone HCH1 (HCH1) from Saccharomyces cerevisiae (strain ATCC 204508 / S288c) (Baker's yeast).